The primary structure comprises 87 residues: U14-lycotoxin-Ls1b (87 aa).

A signal peptide spans 1 to 20 (MNSKVFAVLLLLALSTCVLS). The WAP domain maps to 21 to 66 (EKYCPTPRNTSCKKMNIRNNCCRDSDCTSNAFCCAEPCGNFCHKAS). Disulfide bonds link Cys24–Cys54, Cys32–Cys58, Cys41–Cys53, Cys42–Cys80, and Cys47–Cys62.

It belongs to the venom protein 11 family. 01 (wap-1) subfamily. Post-translationally, contains 5 disulfide bonds. In terms of tissue distribution, expressed by the venom gland.

It is found in the secreted. Has antibacterial activity. This is U14-lycotoxin-Ls1b from Lycosa singoriensis (Wolf spider).